Here is a 504-residue protein sequence, read N- to C-terminus: MNVKPEEITSIIKSQIEKYEKKIETVDSGTIIQIGDGIARVYGLNGCMAGELLEFPNDVYAMALNLEQDNVGCVLLGSQEGIKEGNTVKRTGKVVEVPVGENIIGRVVNSLGHPIDGKGAISTTETRAVELVAPGVITRQAVKQPLQTGIKAIDAMIPIGRGQRELIIGDRQTGKTAIAMDTIINQKGKDVICIYVAIGQKQSTVAHIVNNLIETNAMDYTIVVSAAASESAPLQYIAPYAGCSMGEYFMNKGKDVLIVYDDLSKHAVAYRAMSLLLRRPPRREAYPGDVFYLHSRLLERAAKLSDKLGGGSLTALPIIETLAGDVTAYIPTNVISITDGQIFLETELFYSGQRPAINAGISVSRVGGNAQIKAMKQVAGTLRIDLAQYRELASFAQFGSDLDKESKRTLEKGKRLTEILKQPQYKPMAVEKQVMILFAASRNYIMDIPVERISEFEEEFLDYMDTHHREIGDEIKEKQVISDELSDKLRNAIEEFKKIFLIEG.

169–176 (GDRQTGKT) is a binding site for ATP.

It belongs to the ATPase alpha/beta chains family. In terms of assembly, F-type ATPases have 2 components, CF(1) - the catalytic core - and CF(0) - the membrane proton channel. CF(1) has five subunits: alpha(3), beta(3), gamma(1), delta(1), epsilon(1). CF(0) has three main subunits: a(1), b(2) and c(9-12). The alpha and beta chains form an alternating ring which encloses part of the gamma chain. CF(1) is attached to CF(0) by a central stalk formed by the gamma and epsilon chains, while a peripheral stalk is formed by the delta and b chains.

It is found in the cell membrane. It carries out the reaction ATP + H2O + 4 H(+)(in) = ADP + phosphate + 5 H(+)(out). Produces ATP from ADP in the presence of a proton gradient across the membrane. The alpha chain is a regulatory subunit. The polypeptide is ATP synthase subunit alpha (Clostridium kluyveri (strain ATCC 8527 / DSM 555 / NBRC 12016 / NCIMB 10680 / K1)).